Here is a 157-residue protein sequence, read N- to C-terminus: D-aminoacyl-tRNA deacylase (157 aa).

Positions 137–138 match the Gly-cisPro motif, important for rejection of L-amino acids motif; it reads GP.

The protein belongs to the DTD family. In terms of assembly, homodimer.

It is found in the cytoplasm. It catalyses the reaction glycyl-tRNA(Ala) + H2O = tRNA(Ala) + glycine + H(+). The catalysed reaction is a D-aminoacyl-tRNA + H2O = a tRNA + a D-alpha-amino acid + H(+). Functionally, an aminoacyl-tRNA editing enzyme that deacylates mischarged D-aminoacyl-tRNAs. Also deacylates mischarged glycyl-tRNA(Ala), protecting cells against glycine mischarging by AlaRS. Acts via tRNA-based rather than protein-based catalysis; rejects L-amino acids rather than detecting D-amino acids in the active site. By recycling D-aminoacyl-tRNA to D-amino acids and free tRNA molecules, this enzyme counteracts the toxicity associated with the formation of D-aminoacyl-tRNA entities in vivo and helps enforce protein L-homochirality. This is D-aminoacyl-tRNA deacylase from Cyanothece sp. (strain PCC 7425 / ATCC 29141).